The primary structure comprises 453 residues: Secreted exoenzyme S (453 aa).

The 134-residue stretch at 96 to 229 (SSAVVFKQMV…LRQAVESEVS (134 aa)) folds into the Bacterial Rho-GAP domain. Positions 239–414 (DGLVKRFGAD…RVLEEAALGE (176 aa)) constitute a TR mART core domain. Active-site residues include Arg319, Ser343, and Glu381.

Its subcellular location is the secreted. It catalyses the reaction L-arginyl-[protein] + NAD(+) = N(omega)-(ADP-D-ribosyl)-L-arginyl-[protein] + nicotinamide + H(+). Bifunctional effector protein that is secreted and delivered by the type III secretion system into eukaryotic target cells. ADP-ribosylates several eukaryotic proteins including ezrin/radixin/moesin (ERM), cyclophilin A and several members of the Ras superfamily. Host Ras ADP-ribosylation blocks its activation by its guanine nucleotide exchange factor, thereby interfering with Ras-mediated signal transduction. For instance, prevents Ras from interacting with and activating phosphoinositol-3-kinase (PI3K), which is required to stimulate the phagocytic NADPH-oxidase that generates reactive oxygen species. The TR mART core domain also contributes to bacterial dissemination to the blood during pneumonia. In addition to this activity, acts via its N-terminal region as a GTPase-activating protein (GAP) for host Rho GTPases including RhoA, Rac1, Cdc42 and Ras. The bacterial Rho-GAP domain activity induces mitochondrial disruption in the target host cell by activating host caspases 3 and 9 that execute cellular death. The sequence is that of Secreted exoenzyme S (exoS) from Pseudomonas aeruginosa (strain ATCC 15692 / DSM 22644 / CIP 104116 / JCM 14847 / LMG 12228 / 1C / PRS 101 / PAO1).